The following is a 488-amino-acid chain: Inosine-5'-monophosphate dehydrogenase (488 aa).

CBS domains follow at residues 95-153 (VISN…SIKI) and 157-216 (MTKD…AKDE). NAD(+) is bound by residues aspartate 250 and 300 to 302 (GIG). K(+) contacts are provided by glycine 302 and glycine 304. An IMP-binding site is contributed by serine 305. Residue cysteine 307 participates in K(+) binding. Catalysis depends on cysteine 307, which acts as the Thioimidate intermediate. IMP-binding positions include 340–342 (DGG), 363–364 (GS), and 387–391 (YRGMG). The active-site Proton acceptor is the arginine 403. Glutamate 417 is an IMP binding site. Residues 467–488 (AGLAESHPHNVQITKESPNYSF) form a disordered region. Positions 471, 472, and 473 each coordinate K(+). Over residues 475–488 (HNVQITKESPNYSF) the composition is skewed to polar residues.

Belongs to the IMPDH/GMPR family. As to quaternary structure, homotetramer. The cofactor is K(+).

The enzyme catalyses IMP + NAD(+) + H2O = XMP + NADH + H(+). Its pathway is purine metabolism; XMP biosynthesis via de novo pathway; XMP from IMP: step 1/1. With respect to regulation, mycophenolic acid (MPA) is a non-competitive inhibitor that prevents formation of the closed enzyme conformation by binding to the same site as the amobile flap. In contrast, mizoribine monophosphate (MZP) is a competitive inhibitor that induces the closed conformation. MPA is a potent inhibitor of mammalian IMPDHs but a poor inhibitor of the bacterial enzymes. MZP is a more potent inhibitor of bacterial IMPDH. Catalyzes the conversion of inosine 5'-phosphate (IMP) to xanthosine 5'-phosphate (XMP), the first committed and rate-limiting step in the de novo synthesis of guanine nucleotides, and therefore plays an important role in the regulation of cell growth. The chain is Inosine-5'-monophosphate dehydrogenase from Staphylococcus epidermidis (strain ATCC 35984 / DSM 28319 / BCRC 17069 / CCUG 31568 / BM 3577 / RP62A).